The chain runs to 309 residues: MYAALIESVVKILQKAEFSVADLAETKPRCFDIVARKDDVVLLIKVLYNVDSLKPEAAEEMKKLTKILQASPIVIGERFKFDFLERGVVYTRYGLPVINLATFYDFIVEGIYPYVYSAPGGYYVKLDSERIREARERLGLSVGDMAKMLGVSRRTVKKYEEGTDTTLSTAAKIEEIIGTFAIKEIDLLNFVEADISEEEEVEGEEGEIIEQLRVIGLSVYPVRQAPFDAVSQAKEDQILTGFKQVREIEKRARLLGRISEAIDAEAAYITDKACKKKVESVVFVLKEELYSVSSAKDFISLLKEKSCEE.

One can recognise an HTH cro/C1-type domain in the interval 131–185 (IREARERLGLSVGDMAKMLGVSRRTVKKYEEGTDTTLSTAAKIEEIIGTFAIKEI). A DNA-binding region (H-T-H motif) is located at residues 142-161 (VGDMAKMLGVSRRTVKKYEE).

The chain is Putative HTH-type transcriptional regulatory protein AF_1787 from Archaeoglobus fulgidus (strain ATCC 49558 / DSM 4304 / JCM 9628 / NBRC 100126 / VC-16).